We begin with the raw amino-acid sequence, 444 residues long: Ribosome biogenesis protein WDR12 homolog (444 aa).

Positions 7–87 (VLVKFVTKLP…ESTLEVEYVP (81 aa)) are ubiquitin-like (UBL) domain. The tract at residues 91–123 (PPQQKNSTPHDDWVSSVDGSRCAPASSSGGSPS) is disordered. 3 WD repeats span residues 105 to 148 (SSVD…VASV), 150 to 191 (AHAG…EEDA), and 203 to 242 (GHED…RWAA). The segment at 243–264 (GTAEASKKKRKTGTANGSAAAG) is disordered. WD repeat units follow at residues 272 to 310 (GHLH…AADT), 312 to 352 (NGSK…GSDA), 360 to 400 (AHGG…PLGM), and 403 to 444 (HHTD…YIVS).

This sequence belongs to the WD repeat WDR12/YTM1 family.

Its subcellular location is the nucleus. The protein resides in the nucleolus. It localises to the nucleoplasm. Its function is as follows. Required for maturation of ribosomal RNAs and formation of the large ribosomal subunit. This chain is Ribosome biogenesis protein WDR12 homolog, found in Chlamydomonas reinhardtii (Chlamydomonas smithii).